We begin with the raw amino-acid sequence, 391 residues long: Methionine import ATP-binding protein MetN 2 (391 aa).

The 237-residue stretch at 44–280 folds into the ABC transporter domain; the sequence is VHVGKVFATP…PRHGATRALL (237 aa). An ATP-binding site is contributed by 77 to 84; that stretch reads GRSGAGKS.

It belongs to the ABC transporter superfamily. Methionine importer (TC 3.A.1.24) family. As to quaternary structure, the complex is composed of two ATP-binding proteins (MetN), two transmembrane proteins (MetI) and a solute-binding protein (MetQ).

It is found in the cell inner membrane. The catalysed reaction is L-methionine(out) + ATP + H2O = L-methionine(in) + ADP + phosphate + H(+). It catalyses the reaction D-methionine(out) + ATP + H2O = D-methionine(in) + ADP + phosphate + H(+). In terms of biological role, part of the ABC transporter complex MetNIQ involved in methionine import. Responsible for energy coupling to the transport system. The sequence is that of Methionine import ATP-binding protein MetN 2 from Burkholderia ambifaria (strain ATCC BAA-244 / DSM 16087 / CCUG 44356 / LMG 19182 / AMMD) (Burkholderia cepacia (strain AMMD)).